The primary structure comprises 74 residues: Conotoxin Cal27 (74 aa).

Positions 1-19 (MSGTGVLLLTLLLLVAMAA) are cleaved as a signal peptide.

May contain 4 disulfide bonds. Expressed by the venom duct.

Its subcellular location is the secreted. Probable neurotoxin. The polypeptide is Conotoxin Cal27 (Californiconus californicus (California cone)).